The chain runs to 332 residues: tRNA dimethylallyltransferase (332 aa).

Position 30-37 (30-37 (GPTAVGKT)) interacts with ATP. 32–37 (TAVGKT) is a binding site for substrate. The interval 57-60 (DSMQ) is interaction with substrate tRNA.

Belongs to the IPP transferase family. As to quaternary structure, monomer. It depends on Mg(2+) as a cofactor.

The enzyme catalyses adenosine(37) in tRNA + dimethylallyl diphosphate = N(6)-dimethylallyladenosine(37) in tRNA + diphosphate. Its function is as follows. Catalyzes the transfer of a dimethylallyl group onto the adenine at position 37 in tRNAs that read codons beginning with uridine, leading to the formation of N6-(dimethylallyl)adenosine (i(6)A). This chain is tRNA dimethylallyltransferase, found in Natranaerobius thermophilus (strain ATCC BAA-1301 / DSM 18059 / JW/NM-WN-LF).